The primary structure comprises 193 residues: ATP-dependent Clp protease proteolytic subunit 2 (193 aa).

The Nucleophile role is filled by Ser98. Residue His123 is part of the active site.

The protein belongs to the peptidase S14 family. Fourteen ClpP subunits assemble into 2 heptameric rings which stack back to back to give a disk-like structure with a central cavity, resembling the structure of eukaryotic proteasomes.

It is found in the cytoplasm. The catalysed reaction is Hydrolysis of proteins to small peptides in the presence of ATP and magnesium. alpha-casein is the usual test substrate. In the absence of ATP, only oligopeptides shorter than five residues are hydrolyzed (such as succinyl-Leu-Tyr-|-NHMec, and Leu-Tyr-Leu-|-Tyr-Trp, in which cleavage of the -Tyr-|-Leu- and -Tyr-|-Trp bonds also occurs).. Its function is as follows. Cleaves peptides in various proteins in a process that requires ATP hydrolysis. Has a chymotrypsin-like activity. Plays a major role in the degradation of misfolded proteins. The chain is ATP-dependent Clp protease proteolytic subunit 2 from Bacillus cereus (strain ATCC 10987 / NRS 248).